The sequence spans 567 residues: Proline--tRNA ligase (567 aa).

This sequence belongs to the class-II aminoacyl-tRNA synthetase family. ProS type 1 subfamily. Homodimer.

The protein resides in the cytoplasm. The enzyme catalyses tRNA(Pro) + L-proline + ATP = L-prolyl-tRNA(Pro) + AMP + diphosphate. Functionally, catalyzes the attachment of proline to tRNA(Pro) in a two-step reaction: proline is first activated by ATP to form Pro-AMP and then transferred to the acceptor end of tRNA(Pro). As ProRS can inadvertently accommodate and process non-cognate amino acids such as alanine and cysteine, to avoid such errors it has two additional distinct editing activities against alanine. One activity is designated as 'pretransfer' editing and involves the tRNA(Pro)-independent hydrolysis of activated Ala-AMP. The other activity is designated 'posttransfer' editing and involves deacylation of mischarged Ala-tRNA(Pro). The misacylated Cys-tRNA(Pro) is not edited by ProRS. The chain is Proline--tRNA ligase from Campylobacter curvus (strain 525.92).